A 312-amino-acid chain; its full sequence is Ribosomal RNA small subunit methyltransferase H (312 aa).

S-adenosyl-L-methionine is bound by residues 33–35, Asp53, Phe79, Asp100, and Gln107; that span reads AGH.

The protein belongs to the methyltransferase superfamily. RsmH family.

It is found in the cytoplasm. The catalysed reaction is cytidine(1402) in 16S rRNA + S-adenosyl-L-methionine = N(4)-methylcytidine(1402) in 16S rRNA + S-adenosyl-L-homocysteine + H(+). Its function is as follows. Specifically methylates the N4 position of cytidine in position 1402 (C1402) of 16S rRNA. In Clostridium acetobutylicum (strain ATCC 824 / DSM 792 / JCM 1419 / IAM 19013 / LMG 5710 / NBRC 13948 / NRRL B-527 / VKM B-1787 / 2291 / W), this protein is Ribosomal RNA small subunit methyltransferase H.